Consider the following 423-residue polypeptide: Structure-specific endonuclease subunit SLX1 (423 aa).

The region spanning 23-105 is the GIY-YIG domain; sequence AFYCCYLLRS…QNTKVSRHAD (83 aa). Disordered regions lie at residues 300–334 and 365–406; these read RRRR…DALQ and AHRP…LGLQ.

The protein belongs to the SLX1 family. In terms of assembly, forms a heterodimer with SLX4. A divalent metal cation serves as cofactor.

It is found in the nucleus. Functionally, catalytic subunit of the SLX1-SLX4 structure-specific endonuclease that resolves DNA secondary structures generated during DNA repair and recombination. Has endonuclease activity towards branched DNA substrates, introducing single-strand cuts in duplex DNA close to junctions with ss-DNA. The protein is Structure-specific endonuclease subunit SLX1 of Paracoccidioides brasiliensis (strain Pb03).